Reading from the N-terminus, the 216-residue chain is Pentapeptide repeat protein VPA0095 (216 aa).

This sequence belongs to the pentapeptide repeat protein family.

In terms of biological role, has no effect when overexpressed in E.coli. When Cys-115 is mutated to Tyr and overexpressed it increases (fluoro)quinolone resistance in E.coli up to 16-fold for ciprofloxacin, levofloxacin and nalidixic acid. The polypeptide is Pentapeptide repeat protein VPA0095 (Vibrio parahaemolyticus serotype O3:K6 (strain RIMD 2210633)).